The sequence spans 338 residues: Ketol-acid reductoisomerase (NADP(+)) (338 aa).

One can recognise a KARI N-terminal Rossmann domain in the interval 1-181; it reads MRVFYDKDCD…GGGRTGIIET (181 aa). NADP(+)-binding positions include 24 to 27, Arg47, Ser50, Thr52, and 82 to 85; these read YGSQ and DEFQ. The active site involves His107. Gly133 provides a ligand contact to NADP(+). The region spanning 182 to 327 is the KARI C-terminal knotted domain; sequence TFKDETETDL…EKLRAMMPWI (146 aa). Residues Asp190, Glu194, Glu226, and Glu230 each contribute to the Mg(2+) site. A substrate-binding site is contributed by Ser251.

Belongs to the ketol-acid reductoisomerase family. Mg(2+) serves as cofactor.

It catalyses the reaction (2R)-2,3-dihydroxy-3-methylbutanoate + NADP(+) = (2S)-2-acetolactate + NADPH + H(+). It carries out the reaction (2R,3R)-2,3-dihydroxy-3-methylpentanoate + NADP(+) = (S)-2-ethyl-2-hydroxy-3-oxobutanoate + NADPH + H(+). It participates in amino-acid biosynthesis; L-isoleucine biosynthesis; L-isoleucine from 2-oxobutanoate: step 2/4. Its pathway is amino-acid biosynthesis; L-valine biosynthesis; L-valine from pyruvate: step 2/4. Involved in the biosynthesis of branched-chain amino acids (BCAA). Catalyzes an alkyl-migration followed by a ketol-acid reduction of (S)-2-acetolactate (S2AL) to yield (R)-2,3-dihydroxy-isovalerate. In the isomerase reaction, S2AL is rearranged via a Mg-dependent methyl migration to produce 3-hydroxy-3-methyl-2-ketobutyrate (HMKB). In the reductase reaction, this 2-ketoacid undergoes a metal-dependent reduction by NADPH to yield (R)-2,3-dihydroxy-isovalerate. In Pseudomonas aeruginosa (strain LESB58), this protein is Ketol-acid reductoisomerase (NADP(+)).